We begin with the raw amino-acid sequence, 300 residues long: Protein SPEAR4 (300 aa).

A compositionally biased stretch (polar residues) spans 1 to 10; the sequence is MCSKTSSVSY. A disordered region spans residues 1–45; the sequence is MCSKTSSVSYGNREDDDNYSSLCPKKQKHNNGGKKRVPRRGPGVA. Positions 25–39 are enriched in basic residues; the sequence is KKQKHNNGGKKRVPR. The SPL signature appears at 40 to 48; the sequence is RGPGVAELE. An EAR motif is present at residues 294-300; it reads IDLRLKL.

As to quaternary structure, interacts with SPL and SPEAR2. In terms of tissue distribution, expressed in leaves.

Its function is as follows. Adapter-like transcriptional repressor recruiting TPL/TPR coepressors to inhibit TCP transcription factors. May be involved in leaf development. The sequence is that of Protein SPEAR4 from Arabidopsis thaliana (Mouse-ear cress).